A 256-amino-acid chain; its full sequence is MALPEFTMRQLLEAGVHFGHQTQRWNPRMSPFIYGARNGIHIMDLTQTVPMLDQALTAIRDTVAKGGRVLFVGTKRQAAAPIAEAAEKSAQYYMNHRWLGGTLTNWKTVSQSINRLKEIDERMAAGAEGLTKKERLGMERDQEKLQASLGGIRDMGGVPDLLFVIDVKKEALAIAEANKLGIPVVAVVDTNCSPDGVDYIIPGNDDAARAISLYCDLVARAALDGMSAQLGAAGVDLGALEEAPVEEAVAEEAAGA.

The protein belongs to the universal ribosomal protein uS2 family.

In Ruegeria sp. (strain TM1040) (Silicibacter sp.), this protein is Small ribosomal subunit protein uS2.